The sequence spans 91 residues: Small ribosomal subunit protein uS17 (91 aa).

The protein belongs to the universal ribosomal protein uS17 family. As to quaternary structure, part of the 30S ribosomal subunit.

Its function is as follows. One of the primary rRNA binding proteins, it binds specifically to the 5'-end of 16S ribosomal RNA. In Acidithiobacillus ferrooxidans (strain ATCC 23270 / DSM 14882 / CIP 104768 / NCIMB 8455) (Ferrobacillus ferrooxidans (strain ATCC 23270)), this protein is Small ribosomal subunit protein uS17.